The chain runs to 314 residues: DNA topoisomerase I (314 aa).

Positions 77 to 314 (IQNRNAKRDR…VDHVKSSTDG (238 aa)) constitute a Topo IB-type catalytic domain. The O-(3'-phospho-DNA)-tyrosine intermediate role is filled by Tyr-274.

It belongs to the type IB topoisomerase family.

Its subcellular location is the virion. It catalyses the reaction ATP-independent breakage of single-stranded DNA, followed by passage and rejoining.. Its function is as follows. Releases the supercoiling and torsional tension of DNA introduced during the DNA replication and transcription by transiently cleaving and rejoining one strand of the DNA duplex. Introduces a single-strand break via transesterification at the specific target site 5'-[CT]CCTTp site in duplex DNA. The scissile phosphodiester is attacked by the catalytic tyrosine of the enzyme, resulting in the formation of a DNA-(3'-phosphotyrosyl)-enzyme intermediate and the expulsion of a 5'-OH DNA strand. The free DNA strand then undergoes passage around the unbroken strand thus removing DNA supercoils. Finally, in the religation step, the DNA 5'-OH attacks the covalent intermediate to expel the active-site tyrosine and restore the DNA phosphodiester backbone. The chain is DNA topoisomerase I (OPG111) from Cynomys gunnisoni (Gunnison's prairie dog).